The sequence spans 698 residues: Potassium-transporting ATPase ATP-binding subunit (698 aa).

4 consecutive transmembrane segments (helical) span residues 56-76, 82-102, 240-260, and 271-291; these read IMFVVEIGFFITLLLSVVPSL, LWFNITVTLVLLFTVFFANFA, TVLISLTLIFLIAVVTLPLFT, and ILVALLVCLIPTTIGGLLSAI. The 4-aspartylphosphate intermediate role is filled by D324. ATP-binding positions include D361, E365, 393 to 400, and K412; that span reads FKAETRMS. The Mg(2+) site is built by D535 and D539. Transmembrane regions (helical) follow at residues 605 to 625, 633 to 653, and 677 to 697; these read FAIIPAMFTVAIPQMEALNIM, AILSALIFNALIIPMLIPLAM, and GGVLVPFIGIKLVDLVVGLFI.

Belongs to the cation transport ATPase (P-type) (TC 3.A.3) family. Type IA subfamily. As to quaternary structure, the system is composed of three essential subunits: KdpA, KdpB and KdpC.

The protein resides in the cell membrane. The catalysed reaction is K(+)(out) + ATP + H2O = K(+)(in) + ADP + phosphate + H(+). In terms of biological role, part of the high-affinity ATP-driven potassium transport (or Kdp) system, which catalyzes the hydrolysis of ATP coupled with the electrogenic transport of potassium into the cytoplasm. This subunit is responsible for energy coupling to the transport system and for the release of the potassium ions to the cytoplasm. The sequence is that of Potassium-transporting ATPase ATP-binding subunit from Bacillus cytotoxicus (strain DSM 22905 / CIP 110041 / 391-98 / NVH 391-98).